A 162-amino-acid polypeptide reads, in one-letter code: Putative ethylene-responsive transcription factor ERF121 (162 aa).

Disordered regions lie at residues 1–21 (MDYSENVQNKNFTPISQPPNL), 84–103 (IKQEKKHKGVRKKPSGKWSA), and 139–162 (KRSARRGSKKGEGSIHQEVGGGDD). The span at 87–98 (EKKHKGVRKKPS) shows a compositional bias: basic residues. Positions 89–146 (KHKGVRKKPSGKWSAEIWDPSTRTRRWLGTFPTAEMAADAYDEAAAALVEKRSARRGS) form a DNA-binding region, AP2/ERF.

This sequence belongs to the AP2/ERF transcription factor family. ERF subfamily.

Its subcellular location is the nucleus. Functionally, probably acts as a transcriptional activator. Binds to the GCC-box pathogenesis-related promoter element. May be involved in the regulation of gene expression by stress factors and by components of stress signal transduction pathways. The polypeptide is Putative ethylene-responsive transcription factor ERF121 (ERF121) (Arabidopsis thaliana (Mouse-ear cress)).